We begin with the raw amino-acid sequence, 363 residues long: Flagellar P-ring protein (363 aa).

A signal peptide spans 1-20 (MKIKLILACALMVFSAASSA).

It belongs to the FlgI family. The basal body constitutes a major portion of the flagellar organelle and consists of four rings (L,P,S, and M) mounted on a central rod.

It localises to the periplasm. The protein localises to the bacterial flagellum basal body. Functionally, assembles around the rod to form the L-ring and probably protects the motor/basal body from shearing forces during rotation. The polypeptide is Flagellar P-ring protein (Shewanella loihica (strain ATCC BAA-1088 / PV-4)).